Consider the following 139-residue polypeptide: 6,7-dimethyl-8-ribityllumazine synthase (139 aa).

Residues F11, 42-44 (ALE), and 66-68 (VVI) contribute to the 5-amino-6-(D-ribitylamino)uracil site. Residue 71–72 (ET) coordinates (2S)-2-hydroxy-3-oxobutyl phosphate. Catalysis depends on H74, which acts as the Proton donor. A 5-amino-6-(D-ribitylamino)uracil-binding site is contributed by N98. R112 is a (2S)-2-hydroxy-3-oxobutyl phosphate binding site.

It belongs to the DMRL synthase family.

It carries out the reaction (2S)-2-hydroxy-3-oxobutyl phosphate + 5-amino-6-(D-ribitylamino)uracil = 6,7-dimethyl-8-(1-D-ribityl)lumazine + phosphate + 2 H2O + H(+). It functions in the pathway cofactor biosynthesis; riboflavin biosynthesis; riboflavin from 2-hydroxy-3-oxobutyl phosphate and 5-amino-6-(D-ribitylamino)uracil: step 1/2. Its function is as follows. Catalyzes the formation of 6,7-dimethyl-8-ribityllumazine by condensation of 5-amino-6-(D-ribitylamino)uracil with 3,4-dihydroxy-2-butanone 4-phosphate. This is the penultimate step in the biosynthesis of riboflavin. The polypeptide is 6,7-dimethyl-8-ribityllumazine synthase (Novosphingobium aromaticivorans (strain ATCC 700278 / DSM 12444 / CCUG 56034 / CIP 105152 / NBRC 16084 / F199)).